A 351-amino-acid polypeptide reads, in one-letter code: Protein Tex24 (351 aa).

Disordered stretches follow at residues 69–101 (PSTA…PSLS), 117–144 (PEDR…AQGK), and 275–298 (EKVK…PKSM). The segment covering 73-83 (HGKRKPGHLPR) has biased composition (basic residues). Residues 275–285 (EKVKPSSHDMH) show a composition bias toward basic and acidic residues.

In terms of tissue distribution, specific to testis, where it is expressed in spermatogonia.

The protein resides in the nucleus. Its function is as follows. Nuclear factor which might have a role in spermatogenesis. This is Protein Tex24 from Mus musculus (Mouse).